A 309-amino-acid chain; its full sequence is Probable manganese-dependent inorganic pyrophosphatase (309 aa).

Positions 9, 13, 15, 75, 97, and 149 each coordinate Mn(2+).

Belongs to the PPase class C family. The cofactor is Mn(2+).

The protein resides in the cytoplasm. It carries out the reaction diphosphate + H2O = 2 phosphate + H(+). The polypeptide is Probable manganese-dependent inorganic pyrophosphatase (Staphylococcus saprophyticus subsp. saprophyticus (strain ATCC 15305 / DSM 20229 / NCIMB 8711 / NCTC 7292 / S-41)).